Consider the following 261-residue polypeptide: Imidazole glycerol phosphate synthase subunit HisF (261 aa).

Residues Asp11 and Asp130 contribute to the active site.

Belongs to the HisA/HisF family. Heterodimer of HisH and HisF.

It localises to the cytoplasm. The enzyme catalyses 5-[(5-phospho-1-deoxy-D-ribulos-1-ylimino)methylamino]-1-(5-phospho-beta-D-ribosyl)imidazole-4-carboxamide + L-glutamine = D-erythro-1-(imidazol-4-yl)glycerol 3-phosphate + 5-amino-1-(5-phospho-beta-D-ribosyl)imidazole-4-carboxamide + L-glutamate + H(+). It functions in the pathway amino-acid biosynthesis; L-histidine biosynthesis; L-histidine from 5-phospho-alpha-D-ribose 1-diphosphate: step 5/9. IGPS catalyzes the conversion of PRFAR and glutamine to IGP, AICAR and glutamate. The HisF subunit catalyzes the cyclization activity that produces IGP and AICAR from PRFAR using the ammonia provided by the HisH subunit. This Heliobacterium mobile (Heliobacillus mobilis) protein is Imidazole glycerol phosphate synthase subunit HisF.